Here is a 385-residue protein sequence, read N- to C-terminus: MSTENLPQSPEQPPRKPRVAVVFGGRSSEHGISVVTAGAVLRAIDRTKYDVLPIGITRDGRWALTADEPERMAITDRRTPSVEELAESNEGGVILPVDPANREVVYSEPGSVPKALGEVDVVFPVLHGPYGEDGTLQGLLELSGVPYVGAGVLASAVGQDKEYMKRVFTSFGLKVGPYVVIRPREWERDESAARRKIVDFAGEHGWPLFVKPARAGSSIGITKVDDLAGLDEAVAEAQRHDPKIIVEALLRGREIECGVLEFEDGPRASVPAEIPPAQSHAYYDFEAKYIDSTPGIVPAPLTPEETAEVRRLAVEAFEATSCEGLVRADFFLTEDGDFVINEINTMPGFTPISMYPQMWQASGIAYPELVDRLVEAALRRSTGLR.

Residues 165–375 form the ATP-grasp domain; that stretch reads KRVFTSFGLK…YPELVDRLVE (211 aa). 201–256 is an ATP binding site; that stretch reads AGEHGWPLFVKPARAGSSIGITKVDDLAGLDEAVAEAQRHDPKIIVEALLRGREIE. The Mg(2+) site is built by aspartate 329, glutamate 342, and asparagine 344.

This sequence belongs to the D-alanine--D-alanine ligase family. Requires Mg(2+) as cofactor. The cofactor is Mn(2+).

It is found in the cytoplasm. The catalysed reaction is 2 D-alanine + ATP = D-alanyl-D-alanine + ADP + phosphate + H(+). It functions in the pathway cell wall biogenesis; peptidoglycan biosynthesis. Its function is as follows. Cell wall formation. In Streptomyces avermitilis (strain ATCC 31267 / DSM 46492 / JCM 5070 / NBRC 14893 / NCIMB 12804 / NRRL 8165 / MA-4680), this protein is D-alanine--D-alanine ligase.